A 247-amino-acid chain; its full sequence is Chalcone--flavanone isomerase (247 aa).

Residues Thr-56, Asn-121, and Ser-198 each coordinate substrate. Residues 223–235 (ENKVEEDATKTDQ) show a composition bias toward basic and acidic residues. The disordered stretch occupies residues 223-247 (ENKVEEDATKTDQEEANDLSLAKEN).

It belongs to the chalcone isomerase family.

It carries out the reaction a chalcone = a flavanone.. The protein operates within secondary metabolite biosynthesis; flavonoid biosynthesis. Its function is as follows. Catalyzes the intramolecular cyclization of bicyclic chalcones into tricyclic (S)-flavanones. Responsible for the isomerization of 4,2',4',6'-tetrahydroxychalcone (also termed chalcone) into naringenin. This chain is Chalcone--flavanone isomerase (CHI), found in Raphanus sativus (Radish).